The following is a 789-amino-acid chain: Trans-4-hydroxy-L-proline dehydratase (789 aa).

The PFL domain occupies 7 to 663 (ERTKKLREES…IMGASPNGRL (657 aa)). The Cysteine radical intermediate role is filled by Cys434. Catalysis depends on Glu436, which acts as the Proton acceptor. Residues 670–789 (EGISPEKGGD…EIIGRTEQTF (120 aa)) form the Glycine radical domain. Gly765 is modified (glycine radical).

The protein belongs to the glycyl radical enzyme (GRE) family. HYPD subfamily. In terms of processing, requires the activating protein PflE to generate the key active site glycyl radical on Gly-765 that is involved in catalysis.

It carries out the reaction trans-4-hydroxy-L-proline = (S)-1-pyrroline-5-carboxylate + H2O + H(+). Glycine radical enzyme that catalyzes the dehydration of the non-proteinogenic amino acid trans-4-hydroxy-L-proline (Hyp) to produce delta(1)-pyrroline-5-carboxylate (P5C). Is involved in the anaerobic degradation of 4-hydroxyproline. The polypeptide is Trans-4-hydroxy-L-proline dehydratase (Clostridioides difficile (Peptoclostridium difficile)).